The primary structure comprises 493 residues: Glutamate--tRNA ligase (493 aa).

A 'HIGH' region motif is present at residues 9–19 (PSPTGFVHIGS). Residues 258–262 (KLSKR) carry the 'KMSKS' region motif. ATP is bound at residue K261.

The protein belongs to the class-I aminoacyl-tRNA synthetase family. Glutamate--tRNA ligase type 1 subfamily. Monomer.

Its subcellular location is the cytoplasm. It carries out the reaction tRNA(Glu) + L-glutamate + ATP = L-glutamyl-tRNA(Glu) + AMP + diphosphate. Functionally, catalyzes the attachment of glutamate to tRNA(Glu) in a two-step reaction: glutamate is first activated by ATP to form Glu-AMP and then transferred to the acceptor end of tRNA(Glu). The polypeptide is Glutamate--tRNA ligase (Clostridioides difficile (strain 630) (Peptoclostridium difficile)).